A 311-amino-acid chain; its full sequence is 2-phospho-L-lactate transferase (311 aa).

Residues D52 and R91 each contribute to the 7,8-didemethyl-8-hydroxy-5-deazariboflavin site.

Belongs to the CofD family. Homodimer. Mg(2+) is required as a cofactor.

The enzyme catalyses (2S)-lactyl-2-diphospho-5'-guanosine + 7,8-didemethyl-8-hydroxy-5-deazariboflavin = oxidized coenzyme F420-0 + GMP + H(+). It participates in cofactor biosynthesis; coenzyme F420 biosynthesis. With respect to regulation, inhibited by EDTA in vitro. Functionally, catalyzes the transfer of the 2-phospholactate moiety from (2S)-lactyl-2-diphospho-5'-guanosine to 7,8-didemethyl-8-hydroxy-5-deazariboflavin (FO) with the formation of oxidized coenzyme F420-0 and GMP. The polypeptide is 2-phospho-L-lactate transferase (Methanocaldococcus jannaschii (strain ATCC 43067 / DSM 2661 / JAL-1 / JCM 10045 / NBRC 100440) (Methanococcus jannaschii)).